A 63-amino-acid polypeptide reads, in one-letter code: Prokaryotic ubiquitin-like protein Pup (63 aa).

Residues 1–28 are disordered; it reads MSDRQTQIPAGGGREDDHDDQVQSAGQV. The segment at 19-57 is ARC ATPase binding; sequence DDQVQSAGQVQVNTEGVDDLLDEIDGLLENNAEEFVRSY. Residue Glu63 forms an Isoglutamyl lysine isopeptide (Glu-Lys) (interchain with K-? in acceptor proteins) linkage.

Belongs to the prokaryotic ubiquitin-like protein family. Strongly interacts with the proteasome-associated ATPase ARC through a hydrophobic interface; the interacting region of Pup lies in its C-terminal half. There is one Pup binding site per ARC hexamer ring.

It functions in the pathway protein degradation; proteasomal Pup-dependent pathway. In terms of biological role, protein modifier that is covalently attached to lysine residues of substrate proteins, thereby targeting them for proteasomal degradation. The tagging system is termed pupylation. The polypeptide is Prokaryotic ubiquitin-like protein Pup (Corynebacterium efficiens (strain DSM 44549 / YS-314 / AJ 12310 / JCM 11189 / NBRC 100395)).